The following is a 567-amino-acid chain: Wee1-like protein kinase 2 (567 aa).

Basic and acidic residues-rich tracts occupy residues 1–12, 25–35, 42–51, and 64–77; these read MDDKDIDKELRQ, EGQKKVEESRE, EKGEVQDSEA, and HELDTSSEKDKESP. The tract at residues 1–117 is disordered; the sequence is MDDKDIDKEL…DSPSTPKTML (117 aa). Phosphoserine is present on Ser76. Residues 173 to 175 carry the Nuclear localization signal motif; sequence KRK. The Protein kinase domain occupies 212 to 486; it reads FLEVEKIGVG…AAALARNTVL (275 aa). ATP contacts are provided by residues 218-226 and Lys241; that span reads IGVGEFGTV. A Nuclear export signal motif is present at residues 315 to 329; that stretch reads KLKDILLQISLGLNY. Asp339 acts as the Proton acceptor in catalysis. Residues Asn344 and Asp380 each coordinate Mg(2+). A coiled-coil region spans residues 494 to 519; that stretch reads EELQQQLNLEKFKTATLERELREAQQ. The segment at 514-567 is disordered; sequence LREAQQAQSPQGYTHHGDTGVSGTHTGSRSTKRLVGGKSARSSSFTSGEREPLH.

This sequence belongs to the protein kinase superfamily. Ser/Thr protein kinase family. WEE1 subfamily. Post-translationally, phosphorylated on serine residues. Phosphorylation leads to increase its activity. Expressed in oocytes (at protein level). May also be expressed in testis.

Its subcellular location is the nucleus. The enzyme catalyses L-tyrosyl-[protein] + ATP = O-phospho-L-tyrosyl-[protein] + ADP + H(+). Functionally, oocyte-specific protein tyrosine kinase that phosphorylates and inhibits CDK1/CDC2 and acts as a key regulator of meiosis during both prophase I and metaphase II. Required to maintain meiotic arrest in oocytes during the germinal vesicle (GV) stage, a long period of quiescence at dictyate prophase I, by phosphorylating CDK1 at 'Tyr-15', leading to inhibit CDK1 activity and prevent meiotic reentry. Also required for metaphase II exit during egg activation by phosphorylating CDK1 at 'Tyr-15', to ensure exit from meiosis in oocytes and promote pronuclear formation. The sequence is that of Wee1-like protein kinase 2 (WEE2) from Homo sapiens (Human).